An 852-amino-acid chain; its full sequence is Bifunctional uridylyltransferase/uridylyl-removing enzyme (852 aa).

Residues 1-318 (MPENLSSALE…STPMRVTLRI (318 aa)) are uridylyltransferase. The tract at residues 319–672 (DDDYIQVNNQ…SRILPQSDSF (354 aa)) is uridylyl-removing. The HD domain occupies 436–558 (VDDHILAVVR…VQTHERLSAL (123 aa)). ACT domains lie at 673–757 (QVMV…SCNR) and 785–852 (SVEI…EQLA).

Belongs to the GlnD family. The cofactor is Mg(2+).

The enzyme catalyses [protein-PII]-L-tyrosine + UTP = [protein-PII]-uridylyl-L-tyrosine + diphosphate. It carries out the reaction [protein-PII]-uridylyl-L-tyrosine + H2O = [protein-PII]-L-tyrosine + UMP + H(+). Its activity is regulated as follows. Uridylyltransferase (UTase) activity is inhibited by glutamine, while glutamine activates uridylyl-removing (UR) activity. Its function is as follows. Modifies, by uridylylation and deuridylylation, the PII regulatory proteins (GlnB and homologs), in response to the nitrogen status of the cell that GlnD senses through the glutamine level. Under low glutamine levels, catalyzes the conversion of the PII proteins and UTP to PII-UMP and PPi, while under higher glutamine levels, GlnD hydrolyzes PII-UMP to PII and UMP (deuridylylation). Thus, controls uridylylation state and activity of the PII proteins, and plays an important role in the regulation of nitrogen assimilation and metabolism. In Neisseria gonorrhoeae (strain NCCP11945), this protein is Bifunctional uridylyltransferase/uridylyl-removing enzyme.